The sequence spans 443 residues: Xaa-Pro dipeptidase (443 aa).

Mn(2+) contacts are provided by D246, D257, H339, E384, and E423.

The protein belongs to the peptidase M24B family. Bacterial-type prolidase subfamily. Mn(2+) serves as cofactor.

It carries out the reaction Xaa-L-Pro dipeptide + H2O = an L-alpha-amino acid + L-proline. Splits dipeptides with a prolyl residue in the C-terminal position. The sequence is that of Xaa-Pro dipeptidase from Serratia proteamaculans (strain 568).